The primary structure comprises 448 residues: Trigger factor (448 aa).

The PPIase FKBP-type domain maps to 163–248 (GDIVVIDFDG…VKDIRVPKAA (86 aa)).

It belongs to the FKBP-type PPIase family. Tig subfamily.

It localises to the cytoplasm. It catalyses the reaction [protein]-peptidylproline (omega=180) = [protein]-peptidylproline (omega=0). Its function is as follows. Involved in protein export. Acts as a chaperone by maintaining the newly synthesized protein in an open conformation. Functions as a peptidyl-prolyl cis-trans isomerase. This chain is Trigger factor, found in Rhodospirillum centenum (strain ATCC 51521 / SW).